The sequence spans 518 residues: uncharacterized protein (518 aa).

This sequence belongs to the MG032/MG096/MG288 family.

This is an uncharacterized protein from Mycoplasma pneumoniae (strain ATCC 29342 / M129 / Subtype 1) (Mycoplasmoides pneumoniae).